Reading from the N-terminus, the 149-residue chain is Transcriptional repressor NrdR (149 aa).

A zinc finger spans residues 3–34; it reads CPFCSIQETKVIDSRLVADGHQVRRRRECTMC. The ATP-cone domain maps to 49 to 139; it reads PRVVKRDGSR…VYRSFEDIRE (91 aa).

It belongs to the NrdR family. The cofactor is Zn(2+).

Its function is as follows. Negatively regulates transcription of bacterial ribonucleotide reductase nrd genes and operons by binding to NrdR-boxes. The polypeptide is Transcriptional repressor NrdR (Pseudoalteromonas atlantica (strain T6c / ATCC BAA-1087)).